The chain runs to 91 residues: UPF0250 protein PputW619_0619 (91 aa).

Belongs to the UPF0250 family.

In Pseudomonas putida (strain W619), this protein is UPF0250 protein PputW619_0619.